A 445-amino-acid chain; its full sequence is Phosphoglucosamine mutase 1 (445 aa).

The Phosphoserine intermediate role is filled by Ser-102. 4 residues coordinate Mg(2+): Ser-102, Asp-241, Asp-243, and Asp-245. The residue at position 102 (Ser-102) is a Phosphoserine.

The protein belongs to the phosphohexose mutase family. The cofactor is Mg(2+). Activated by phosphorylation.

The catalysed reaction is alpha-D-glucosamine 1-phosphate = D-glucosamine 6-phosphate. Functionally, catalyzes the conversion of glucosamine-6-phosphate to glucosamine-1-phosphate. The protein is Phosphoglucosamine mutase 1 of Shewanella frigidimarina (strain NCIMB 400).